A 105-amino-acid polypeptide reads, in one-letter code: Integration host factor subunit beta (105 aa).

Belongs to the bacterial histone-like protein family. In terms of assembly, heterodimer of an alpha and a beta chain.

In terms of biological role, this protein is one of the two subunits of integration host factor, a specific DNA-binding protein that functions in genetic recombination as well as in transcriptional and translational control. The protein is Integration host factor subunit beta of Nitrosomonas europaea (strain ATCC 19718 / CIP 103999 / KCTC 2705 / NBRC 14298).